Reading from the N-terminus, the 204-residue chain is Leucyl/phenylalanyl-tRNA--protein transferase (204 aa).

Belongs to the L/F-transferase family.

It localises to the cytoplasm. The catalysed reaction is N-terminal L-lysyl-[protein] + L-leucyl-tRNA(Leu) = N-terminal L-leucyl-L-lysyl-[protein] + tRNA(Leu) + H(+). The enzyme catalyses N-terminal L-arginyl-[protein] + L-leucyl-tRNA(Leu) = N-terminal L-leucyl-L-arginyl-[protein] + tRNA(Leu) + H(+). It catalyses the reaction L-phenylalanyl-tRNA(Phe) + an N-terminal L-alpha-aminoacyl-[protein] = an N-terminal L-phenylalanyl-L-alpha-aminoacyl-[protein] + tRNA(Phe). In terms of biological role, functions in the N-end rule pathway of protein degradation where it conjugates Leu, Phe and, less efficiently, Met from aminoacyl-tRNAs to the N-termini of proteins containing an N-terminal arginine or lysine. The chain is Leucyl/phenylalanyl-tRNA--protein transferase from Sinorhizobium fredii (strain NBRC 101917 / NGR234).